A 525-amino-acid polypeptide reads, in one-letter code: GMP synthase [glutamine-hydrolyzing] (525 aa).

One can recognise a Glutamine amidotransferase type-1 domain in the interval 8–207 (KILILDFGSQ…AVAICGCGTN (200 aa)). Cys-85 acts as the Nucleophile in catalysis. Residues His-181 and Glu-183 contribute to the active site. One can recognise a GMPS ATP-PPase domain in the interval 208–400 (WKPSSIIEDA…LGLPYNMLYR (193 aa)). 235–241 (SGGVDSS) provides a ligand contact to ATP.

In terms of assembly, homodimer.

The catalysed reaction is XMP + L-glutamine + ATP + H2O = GMP + L-glutamate + AMP + diphosphate + 2 H(+). It participates in purine metabolism; GMP biosynthesis; GMP from XMP (L-Gln route): step 1/1. In terms of biological role, catalyzes the synthesis of GMP from XMP. The chain is GMP synthase [glutamine-hydrolyzing] from Shewanella denitrificans (strain OS217 / ATCC BAA-1090 / DSM 15013).